The sequence spans 477 residues: Bifunctional protein HldE (477 aa).

The ribokinase stretch occupies residues 1–318 (MQIQLPMFQN…RRAVQQEQGA (318 aa)). Residue 195-198 (NLSE) coordinates ATP. The active site involves D264. A cytidylyltransferase region spans residues 344-477 (FTNGCFDIIH…VEKIRKDQVK (134 aa)).

The protein in the N-terminal section; belongs to the carbohydrate kinase PfkB family. This sequence in the C-terminal section; belongs to the cytidylyltransferase family. As to quaternary structure, homodimer.

The catalysed reaction is D-glycero-beta-D-manno-heptose 7-phosphate + ATP = D-glycero-beta-D-manno-heptose 1,7-bisphosphate + ADP + H(+). The enzyme catalyses D-glycero-beta-D-manno-heptose 1-phosphate + ATP + H(+) = ADP-D-glycero-beta-D-manno-heptose + diphosphate. It functions in the pathway nucleotide-sugar biosynthesis; ADP-L-glycero-beta-D-manno-heptose biosynthesis; ADP-L-glycero-beta-D-manno-heptose from D-glycero-beta-D-manno-heptose 7-phosphate: step 1/4. Its pathway is nucleotide-sugar biosynthesis; ADP-L-glycero-beta-D-manno-heptose biosynthesis; ADP-L-glycero-beta-D-manno-heptose from D-glycero-beta-D-manno-heptose 7-phosphate: step 3/4. Functionally, catalyzes the phosphorylation of D-glycero-D-manno-heptose 7-phosphate at the C-1 position to selectively form D-glycero-beta-D-manno-heptose-1,7-bisphosphate. Its function is as follows. Catalyzes the ADP transfer from ATP to D-glycero-beta-D-manno-heptose 1-phosphate, yielding ADP-D-glycero-beta-D-manno-heptose. This Hahella chejuensis (strain KCTC 2396) protein is Bifunctional protein HldE.